A 139-amino-acid chain; its full sequence is D-ribose pyranase (139 aa).

His20 acts as the Proton donor in catalysis. Substrate is bound by residues Asp28, His106, and 128 to 130 (YAN).

The protein belongs to the RbsD / FucU family. RbsD subfamily. In terms of assembly, homodecamer.

The protein resides in the cytoplasm. It catalyses the reaction beta-D-ribopyranose = beta-D-ribofuranose. Its pathway is carbohydrate metabolism; D-ribose degradation; D-ribose 5-phosphate from beta-D-ribopyranose: step 1/2. Its function is as follows. Catalyzes the interconversion of beta-pyran and beta-furan forms of D-ribose. The sequence is that of D-ribose pyranase from Salmonella paratyphi B (strain ATCC BAA-1250 / SPB7).